The following is a 299-amino-acid chain: ATP phosphoribosyltransferase (299 aa).

Belongs to the ATP phosphoribosyltransferase family. Long subfamily. Equilibrium between an active dimeric form, an inactive hexameric form and higher aggregates. Interconversion between the various forms is largely reversible and is influenced by the natural substrates and inhibitors of the enzyme. Requires Mg(2+) as cofactor.

It is found in the cytoplasm. It carries out the reaction 1-(5-phospho-beta-D-ribosyl)-ATP + diphosphate = 5-phospho-alpha-D-ribose 1-diphosphate + ATP. Its pathway is amino-acid biosynthesis; L-histidine biosynthesis; L-histidine from 5-phospho-alpha-D-ribose 1-diphosphate: step 1/9. Its activity is regulated as follows. Feedback inhibited by histidine. Functionally, catalyzes the condensation of ATP and 5-phosphoribose 1-diphosphate to form N'-(5'-phosphoribosyl)-ATP (PR-ATP). Has a crucial role in the pathway because the rate of histidine biosynthesis seems to be controlled primarily by regulation of HisG enzymatic activity. The chain is ATP phosphoribosyltransferase from Escherichia coli O7:K1 (strain IAI39 / ExPEC).